We begin with the raw amino-acid sequence, 345 residues long: tRNA N6-adenosine threonylcarbamoyltransferase (345 aa).

Fe cation-binding residues include His-111 and His-115. Substrate-binding positions include 134–138 (LVSGG), Asp-167, Gly-180, Asp-184, and Asn-278. A Fe cation-binding site is contributed by Asp-306.

This sequence belongs to the KAE1 / TsaD family. Fe(2+) serves as cofactor.

The protein localises to the cytoplasm. It catalyses the reaction L-threonylcarbamoyladenylate + adenosine(37) in tRNA = N(6)-L-threonylcarbamoyladenosine(37) in tRNA + AMP + H(+). In terms of biological role, required for the formation of a threonylcarbamoyl group on adenosine at position 37 (t(6)A37) in tRNAs that read codons beginning with adenine. Is involved in the transfer of the threonylcarbamoyl moiety of threonylcarbamoyl-AMP (TC-AMP) to the N6 group of A37, together with TsaE and TsaB. TsaD likely plays a direct catalytic role in this reaction. This Cyanothece sp. (strain PCC 7425 / ATCC 29141) protein is tRNA N6-adenosine threonylcarbamoyltransferase.